We begin with the raw amino-acid sequence, 236 residues long: Small ribosomal subunit protein uS2c (236 aa).

It belongs to the universal ribosomal protein uS2 family.

The protein resides in the plastid. The protein localises to the chloroplast. The chain is Small ribosomal subunit protein uS2c (rps2) from Zea mays (Maize).